A 904-amino-acid chain; its full sequence is Transcription factor E2F7 (904 aa).

The disordered stretch occupies residues 61-80 (TPDRNPITPVKPVDRQPQVE). Ser96 is subject to Phosphoserine. A DNA-binding region spans residues 143 to 212 (RKQKSLGLLC…VAKNQYGWHG (70 aa)). Over residues 252-269 (GERRKDGSPDPRDPHLLD) the composition is skewed to basic and acidic residues. A disordered region spans residues 252-283 (GERRKDGSPDPRDPHLLDFSEADYPSSSANSR). The DNA-binding element occupies 283 to 368 (RKDKSLRIMS…GRKPAFKWIG (86 aa)). A Phosphoserine modification is found at Ser411. The disordered stretch occupies residues 560-628 (LSPESRSEED…VMPKKPSSST (69 aa)). Ser833 is modified (phosphoserine). The disordered stretch occupies residues 846–904 (AEQSPAPATPKSIQRRHRETFFKTPGSLGDPVFRRKERNQSRNTSSAQRRLEISSSGPD). Polar residues predominate over residues 886–904 (SRNTSSAQRRLEISSSGPD).

The protein belongs to the E2F/DP family. Interacts with HIF1A. Homodimer and heterodimer: mainly forms homodimers and, to a lesser extent, heterodimers with E2F8. Dimerization is important for DNA-binding. Interacts with MN1. In terms of tissue distribution, widely expressed with highest levels in skin and thymus and very low levels in brain, muscle and stomach. Expressed in trophoblast giant cells throughout placenta development (at protein level).

It is found in the nucleus. Atypical E2F transcription factor that participates in various processes such as angiogenesis, polyploidization of specialized cells and DNA damage response. Mainly acts as a transcription repressor that binds DNA independently of DP proteins and specifically recognizes the E2 recognition site 5'-TTTC[CG]CGC-3'. Directly represses transcription of classical E2F transcription factors such as E2F1. Acts as a regulator of S-phase by recognizing and binding the E2-related site 5'-TTCCCGCC-3' and mediating repression of G1/S-regulated genes. Plays a key role in polyploidization of cells in placenta and liver by regulating the endocycle, probably by repressing genes promoting cytokinesis and antagonizing action of classical E2F proteins (E2F1, E2F2 and/or E2F3). Required for placental development by promoting polyploidization of trophoblast giant cells. Also involved in DNA damage response: up-regulated by p53/TP53 following genotoxic stress and acts as a downstream effector of p53/TP53-dependent repression by mediating repression of indirect p53/TP53 target genes involved in DNA replication. Acts as a promoter of sprouting angiogenesis, possibly by acting as a transcription activator: associates with HIF1A, recognizes and binds the VEGFA promoter, which is different from canonical E2 recognition site, and activates expression of the VEGFA gene. Acts as a negative regulator of keratinocyte differentiation. The polypeptide is Transcription factor E2F7 (E2f7) (Mus musculus (Mouse)).